A 166-amino-acid polypeptide reads, in one-letter code: Large ribosomal subunit protein uL10 (166 aa).

This sequence belongs to the universal ribosomal protein uL10 family. Part of the ribosomal stalk of the 50S ribosomal subunit. The N-terminus interacts with L11 and the large rRNA to form the base of the stalk. The C-terminus forms an elongated spine to which L12 dimers bind in a sequential fashion forming a multimeric L10(L12)X complex.

In terms of biological role, forms part of the ribosomal stalk, playing a central role in the interaction of the ribosome with GTP-bound translation factors. In Mesoplasma florum (strain ATCC 33453 / NBRC 100688 / NCTC 11704 / L1) (Acholeplasma florum), this protein is Large ribosomal subunit protein uL10.